A 376-amino-acid chain; its full sequence is Probable ribonucleoside-diphosphate reductase small subunit 048L (376 aa).

Fe cation-binding residues include Asp110, Glu140, and His143. The active site involves Tyr147. Positions 217, 251, and 254 each coordinate Fe cation.

The protein belongs to the ribonucleoside diphosphate reductase small chain family. Heterotetramer composed of a homodimer of the large subunit (R1) and a homodimer of the small subunit (R2). Larger multisubunit protein complex are also active, composed of (R1)n(R2)n. Fe cation is required as a cofactor.

The enzyme catalyses a 2'-deoxyribonucleoside 5'-diphosphate + [thioredoxin]-disulfide + H2O = a ribonucleoside 5'-diphosphate + [thioredoxin]-dithiol. In terms of biological role, ribonucleoside-diphosphate reductase holoenzyme provides the precursors necessary for viral DNA synthesis. Allows virus growth in non-dividing cells. Catalyzes the biosynthesis of deoxyribonucleotides from the corresponding ribonucleotides. This chain is Probable ribonucleoside-diphosphate reductase small subunit 048L, found in Invertebrate iridescent virus 3 (IIV-3).